Here is a 290-residue protein sequence, read N- to C-terminus: Ribosomal RNA small subunit methyltransferase A (290 aa).

Positions 27, 29, 54, 75, 100, and 125 each coordinate S-adenosyl-L-methionine.

The protein belongs to the class I-like SAM-binding methyltransferase superfamily. rRNA adenine N(6)-methyltransferase family. RsmA subfamily.

The protein localises to the cytoplasm. It carries out the reaction adenosine(1518)/adenosine(1519) in 16S rRNA + 4 S-adenosyl-L-methionine = N(6)-dimethyladenosine(1518)/N(6)-dimethyladenosine(1519) in 16S rRNA + 4 S-adenosyl-L-homocysteine + 4 H(+). Specifically dimethylates two adjacent adenosines (A1518 and A1519) in the loop of a conserved hairpin near the 3'-end of 16S rRNA in the 30S particle. May play a critical role in biogenesis of 30S subunits. This Streptococcus gordonii (strain Challis / ATCC 35105 / BCRC 15272 / CH1 / DL1 / V288) protein is Ribosomal RNA small subunit methyltransferase A.